A 383-amino-acid chain; its full sequence is Acetylornithine deacetylase (383 aa).

His-80 provides a ligand contact to Zn(2+). Asp-82 is a catalytic residue. Zn(2+) is bound at residue Asp-112. Glu-144 is an active-site residue. The Zn(2+) site is built by Glu-145, Glu-169, and His-355.

This sequence belongs to the peptidase M20A family. ArgE subfamily. As to quaternary structure, homodimer. Requires Zn(2+) as cofactor. It depends on Co(2+) as a cofactor. Glutathione is required as a cofactor.

It localises to the cytoplasm. It carries out the reaction N(2)-acetyl-L-ornithine + H2O = L-ornithine + acetate. The protein operates within amino-acid biosynthesis; L-arginine biosynthesis; L-ornithine from N(2)-acetyl-L-ornithine (linear): step 1/1. In terms of biological role, catalyzes the hydrolysis of the amide bond of N(2)-acetylated L-amino acids. Cleaves the acetyl group from N-acetyl-L-ornithine to form L-ornithine, an intermediate in L-arginine biosynthesis pathway, and a branchpoint in the synthesis of polyamines. The sequence is that of Acetylornithine deacetylase from Escherichia coli O8 (strain IAI1).